Consider the following 386-residue polypeptide: MIILFIHASDFSFNVKERAIKEPEEAKLKSIELKNTLVCFTTVEKGDDEEILSKAIDDILDVYSKVKADSVVIYPYAHLSSNLANPDTAIKILESLENLLKDKVKVYRAPFGWYKAFSISCYGHPLSELSRRIRKTEELEKSEELKYCEKFGFPSSSESAFMRRATIGYLRNLFQPLFESENNENVRDGEMSILYQNVESGRILPCINENPRIVVVYGGVRELNFPKEINDSKNRIRVWWVNESKIYVDVGRLIYYFILESVKQQPPTLPDWLNPIQVRLLPVKKDFLDFSIQVAERLRKEGIRVNIDDLDDSLGNKIRRAGTDWIPFVIVIGEREVKTNTLTVKIRARNEQKSMTVEELVKEIKDEVKERQNLPLYYTLYRHKNN.

The protein belongs to the class-II aminoacyl-tRNA synthetase family. Archaea-specific ThrRS editing domain subfamily. As to quaternary structure, probably interacts with its catalytic subunit (AC Q97VW8); a subunit fusion (in the order edit-catalytic) is fully functional.

The protein localises to the cytoplasm. Its function is as follows. Freestanding tRNA editing subunit of threonine--tRNA ligase, the catalytic subunit is AC Q97VW8. Deacylates (edits) mischarged L-seryl-tRNA(Thr) in trans, removing L-serine, has no aminoacylation activity. In vitro when both subunits are present, or if the 2 subunits are fused, L-seryl-tRNA(Thr) is no longer produced. Has no activity on correctly acylated L-seryl-tRNA(Ser) or L-threonyl-tRNA(Thr). Editing is probably catalyzed by the 2'-OH of A76 of tRNA(Thr). In Saccharolobus solfataricus (strain ATCC 35092 / DSM 1617 / JCM 11322 / P2) (Sulfolobus solfataricus), this protein is Threonine--tRNA ligase editing subunit.